We begin with the raw amino-acid sequence, 21 residues long: Peptide PGLa-R5 (21 aa).

Leucine 21 is subject to Leucine amide.

In terms of tissue distribution, expressed by the skin glands.

It is found in the secreted. Its function is as follows. Antimicrobial peptide. The chain is Peptide PGLa-R5 from Xenopus ruwenzoriensis (Uganda clawed frog).